The following is a 228-amino-acid chain: MKKLLLIAATSATVLSSALSFADCGNDSWYLRVDAGAAMFNKEKDNQTGLKLKSNTAFTGDIGVGNYIAENFRADLTLGTTFSGKLKKSGAVSSLGGANISASHKPNITRLLINGYVDLSNFEMFDVFAGAGIGASMLKEKVSFSGINSGATVSTSYSSKNTTNLAYKLTLGASSQISDGVKAELAYSWISDGKTKGGNVNLFGLGNKQVKGTRYQSHNLTAGLRFDV.

Positions 1-22 (MKKLLLIAATSATVLSSALSFA) are cleaved as a signal peptide.

The polypeptide is Putative adhesin A1I_01215 (Rickettsia bellii (strain OSU 85-389)).